The primary structure comprises 1042 residues: Glutamate dehydrogenase 2 (1042 aa).

Residue lysine 596 is part of the active site. Arginine 763 bears the ADP-ribosylarginine; by Legionella Lart1 mark.

The protein belongs to the Glu/Leu/Phe/Val dehydrogenases family. In terms of assembly, homodimer. Post-translationally, (Microbial infection) ADP-ribosylated at Arg-763 by the Legionella pneumophila effector Lart1, which inhibits the glutamate dehydrogenase activity. Amoeba are natural hosts of Legionella, and ADP-ribosylation by Lart1 may promote Legionella parasitism.

The protein resides in the cytoplasm. The catalysed reaction is L-glutamate + NAD(+) + H2O = 2-oxoglutarate + NH4(+) + NADH + H(+). Its activity is regulated as follows. Activity is stimulated by AMP. (Microbial infection) Inhibited by ADP-ribosylation. This Dictyostelium discoideum (Social amoeba) protein is Glutamate dehydrogenase 2 (glud2).